A 727-amino-acid polypeptide reads, in one-letter code: Centrosomal protein kizuna (727 aa).

Residues Met-1–Pro-20 are disordered. Positions Lys-77 to Asp-124 form a coiled coil. 3 disordered regions span residues Asp-176–Asp-226, Glu-271–Leu-456, and Arg-564–Pro-727. The segment covering His-198–Asn-223 has biased composition (polar residues). Over residues Leu-286–Arg-324 the composition is skewed to basic and acidic residues. Position 328 is a phosphoserine (Ser-328). Residues Pro-343–Cys-359 are compositionally biased toward basic and acidic residues. The segment covering Leu-380–Val-390 has biased composition (low complexity). Position 387 is a phosphothreonine; by PLK1 (Thr-387). Over residues Ala-442 to Asn-455 the composition is skewed to polar residues. Positions Ser-569 to Glu-583 are enriched in low complexity. The span at Gln-603 to Glu-613 shows a compositional bias: acidic residues. Positions Leu-631 to Gln-642 are enriched in polar residues. Composition is skewed to low complexity over residues Gly-659–Thr-669 and Ser-677–Leu-689. Residues Ser-711, Ser-714, and Ser-716 each carry the phosphoserine modification.

Belongs to the kizuna family. As to quaternary structure, interacts with AKAP9, CEP72, ODF2, PCNT and TUBGCP2. Post-translationally, phosphorylation at Thr-387 by PLK1 is not needed for centrosomal localization or pericentriolar material expansion but is indispensable for spindle-pole stabilization.

It is found in the cytoplasm. The protein localises to the cytoskeleton. The protein resides in the microtubule organizing center. It localises to the centrosome. Its subcellular location is the cilium basal body. In terms of biological role, centrosomal protein required for establishing a robust mitotic centrosome architecture that can endure the forces that converge on the centrosomes during spindle formation. Required for stabilizing the expanded pericentriolar material around the centriole. In Bos taurus (Bovine), this protein is Centrosomal protein kizuna (KIZ).